The sequence spans 924 residues: Type II inositol 3,4-bisphosphate 4-phosphatase (924 aa).

Over residues 1–13 (MEIKEEGASEEGQ) the composition is skewed to basic and acidic residues. 3 disordered regions span residues 1–25 (MEIK…SDPG), 481–516 (ILKK…HSDY), and 546–569 (DGGS…DAIP). The 143-residue stretch at 23–165 (DPGDCQFTSI…LKSKEQLLVL (143 aa)) folds into the C2 domain.

Belongs to the inositol 3,4-bisphosphate 4-phosphatase family.

It carries out the reaction a 1,2-diacyl-sn-glycero-3-phospho-(1D-myo-inositol-3,4-bisphosphate) + H2O = a 1,2-diacyl-sn-glycero-3-phospho-(1D-myo-inositol-3-phosphate) + phosphate. The enzyme catalyses 1D-myo-inositol 1,3,4-trisphosphate + H2O = 1D-myo-inositol 1,3-bisphosphate + phosphate. The catalysed reaction is 1D-myo-inositol 3,4-bisphosphate + H2O = 1D-myo-inositol 3-phosphate + phosphate. It functions in the pathway signal transduction; phosphatidylinositol signaling pathway. With respect to regulation, strongly inhibited by inositol hexakisphosphate. Catalyzes the hydrolysis of the 4-position phosphate of phosphatidylinositol 3,4-bisphosphate, inositol 1,3,4-trisphosphate and inositol 3,4-bisphosphate. Plays a role in the late stages of macropinocytosis by dephosphorylating phosphatidylinositol 3,4-bisphosphate in membrane ruffles. Antagonizes the PI3K-AKT/PKB signaling pathway by dephosphorylating phosphoinositides and thereby modulating cell cycle progression and cell survival. This is Type II inositol 3,4-bisphosphate 4-phosphatase (INPP4B) from Pongo abelii (Sumatran orangutan).